A 548-amino-acid chain; its full sequence is MYIKAEQKPQQFERKNEKLDRNKNQQLPDLETDFKGYRVNSDLYNKERDGSTEETLNSLKFLHKPQRVTQMRANRFPEEEVQRNTDLNKRIFSAGNDENVDNESGWSKIAAAKNHTSVESLNGSTRPPFKIELPPLSPKSTVPKSFQAEYPEAKSPGNDMNFEYDEEILIPFAPPVYKKSGELLKSSLKRRSKSLPTTPGIRSGNGVQARDGSPMLIRSKSVHFDQAAPVKYFAEDESPINVNKTEQHDNCLSFKHKPVNLMVDPEEETKMLSSGLETTSIDDDLTTVAPKGFAHPAKISNPNNGKGTNNTKLRKSKRFQNLLKNRTDMPPSKSNKKFVNGGGAHEISDRNSKNYHVVGLYSKNFPILSNKNPKSLKLNIFINLSQNKKVFLQELSLYIHRDNNYFSNSSSFYNIPNSHNGNDCNGVAKGYNAGCTRLIAGRILVKNIFYDKRVVVRYTWDSWRTTHEVECVYISDGDGILPGTNMDIFHFIIDDVSKVDPRGKLEFCIHYSTRNDYEREEYWDNNNGNNYKVDVVMDGFNDPFAAAA.

A compositionally biased stretch (basic and acidic residues) spans 1-23 (MYIKAEQKPQQFERKNEKLDRNK). Disordered stretches follow at residues 1 to 54 (MYIK…STEE) and 118 to 143 (VESL…STVP). Ser-51 is subject to Phosphoserine. Thr-52 bears the Phosphothreonine mark. Position 155 is a phosphoserine (Ser-155). A disordered region spans residues 191–212 (RSKSLPTTPGIRSGNGVQARDG). A phosphoserine mark is found at Ser-221 and Ser-238. The disordered stretch occupies residues 293 to 346 (FAHPAKISNPNNGKGTNNTKLRKSKRFQNLLKNRTDMPPSKSNKKFVNGGGAHE). Residues 419–534 (HNGNDCNGVA…NNNGNNYKVD (116 aa)) enclose the CBM21 domain.

In terms of assembly, interacts with phosphatase 1 (GLC7).

This is GLC7-interacting protein 2 (GIP2) from Saccharomyces cerevisiae (strain ATCC 204508 / S288c) (Baker's yeast).